The following is a 185-amino-acid chain: NADH-quinone oxidoreductase subunit B (185 aa).

Residues cysteine 37, cysteine 38, cysteine 103, and cysteine 132 each contribute to the [4Fe-4S] cluster site.

The protein belongs to the complex I 20 kDa subunit family. In terms of assembly, NDH-1 is composed of 14 different subunits. Subunits NuoB, C, D, E, F, and G constitute the peripheral sector of the complex. It depends on [4Fe-4S] cluster as a cofactor.

The protein localises to the cell membrane. The enzyme catalyses a quinone + NADH + 5 H(+)(in) = a quinol + NAD(+) + 4 H(+)(out). Functionally, NDH-1 shuttles electrons from NADH, via FMN and iron-sulfur (Fe-S) centers, to quinones in the respiratory chain. The immediate electron acceptor for the enzyme in this species is believed to be a menaquinone. Couples the redox reaction to proton translocation (for every two electrons transferred, four hydrogen ions are translocated across the cytoplasmic membrane), and thus conserves the redox energy in a proton gradient. This is NADH-quinone oxidoreductase subunit B from Thermobifida fusca (strain YX).